The chain runs to 382 residues: MQQRQSILWGAVATLMWAGLAHAGEASPVDPLRPVVDASIQPLLKEHRIPGMAVAVLKDGKAHYFNYGVANRESGAGVSEQTLFEIGSVSKTLTATLGAYAVVKGAMQLDDKASRHAPWLKGSAFDSITMGELATYSAGGLPLQFPEEVDSSEKMRAYYRQWAPVYSPGSHRQYSNPSIGLFGHLAASSLKQPFAPLMEQTLLPGLGMHHTYVNVPKQAMASYAYGYSKEDKPIRVNPGMLADEAYGIKTSSADLLRFVKANIGGVDDKALQQAISLTHQGHYSVGGMTQGLGWESYAYPVTEQTLLAGNSAKVILEANPTAAPRESGSQVLFNKTGSTNGFGAYVAFVPARGIGIVMLANRNYPNEARIKAAHAILAQLAG.

Positions 1–23 are cleaved as a signal peptide; the sequence is MQQRQSILWGAVATLMWAGLAHA. Catalysis depends on Ser88, which acts as the Acyl-ester intermediate. Ser88, Gln144, Tyr174, Asn176, and Asn363 together coordinate a beta-lactam.

This sequence belongs to the class-C beta-lactamase family.

It catalyses the reaction a beta-lactam + H2O = a substituted beta-amino acid. With respect to regulation, inhibited by the beta-lactamase-blocking agent sulbactam. Functionally, class C beta-lactamase which confers resistance to penicillins and cephalosporins. Has benzylpenicillin- and cefalotin-hydrolyzing activities. Has weak cefuroxime, cefotaxime, cefoxitin, imipenem and oxacillin-hydrolyzing activities. This Klebsiella pneumoniae protein is Beta-lactamase CMY-1.